Consider the following 500-residue polypeptide: UDP-N-acetylmuramoyl-L-alanyl-D-glutamate--2,6-diaminopimelate ligase (500 aa).

S32 is a binding site for UDP-N-acetyl-alpha-D-muramoyl-L-alanyl-D-glutamate. 117 to 123 (GTNGKTT) is an ATP binding site. UDP-N-acetyl-alpha-D-muramoyl-L-alanyl-D-glutamate contacts are provided by residues 159-160 (TT), S186, Q192, and R194. K226 is subject to N6-carboxylysine. Residues R395, 419–422 (DNPR), G470, and E474 each bind meso-2,6-diaminopimelate. The Meso-diaminopimelate recognition motif signature appears at 419–422 (DNPR).

It belongs to the MurCDEF family. MurE subfamily. Mg(2+) is required as a cofactor. In terms of processing, carboxylation is probably crucial for Mg(2+) binding and, consequently, for the gamma-phosphate positioning of ATP.

Its subcellular location is the cytoplasm. It carries out the reaction UDP-N-acetyl-alpha-D-muramoyl-L-alanyl-D-glutamate + meso-2,6-diaminopimelate + ATP = UDP-N-acetyl-alpha-D-muramoyl-L-alanyl-gamma-D-glutamyl-meso-2,6-diaminopimelate + ADP + phosphate + H(+). It functions in the pathway cell wall biogenesis; peptidoglycan biosynthesis. In terms of biological role, catalyzes the addition of meso-diaminopimelic acid to the nucleotide precursor UDP-N-acetylmuramoyl-L-alanyl-D-glutamate (UMAG) in the biosynthesis of bacterial cell-wall peptidoglycan. The chain is UDP-N-acetylmuramoyl-L-alanyl-D-glutamate--2,6-diaminopimelate ligase from Parasynechococcus marenigrum (strain WH8102).